Here is a 402-residue protein sequence, read N- to C-terminus: Mitochondrial inner membrane protein OXA1 (402 aa).

The transit peptide at 1-42 (MFKLTSRLVTSRFAASSRLATARTIVLPRPHPSWISFQAKRF) directs the protein to the mitochondrion. Residues 43 to 118 (NSTGPNANDV…PSDIIQHVLE (76 aa)) are Mitochondrial intermembrane-facing. A helical membrane pass occupies residues 119 to 139 (AVHVYSGLPWWGTIAATTILI). Residues 140–199 (RCLMFPLYVKSSDTVARNSHIKPELDALNNKLMSTTDLQQGQLVAMQRKKLLSSHGIKNR) are Mitochondrial matrix-facing. Residues 200–220 (WLAAPMLQIPIALGFFNALRH) form a helical membrane-spanning segment. Topologically, residues 221-239 (MANYPVDGFANQGVAWFTD) are mitochondrial intermembrane. A helical membrane pass occupies residues 240-260 (LTQADPYLGLQVITAAVFISF). The Mitochondrial matrix segment spans residues 261–275 (TRLGGETGAQQFSSP). Residues 276–292 (MKRLFTILPIISIPATM) traverse the membrane as a helical segment. At 293–297 (NLSSA) the chain is on the mitochondrial intermembrane side. The helical transmembrane segment at 298–316 (VVLYFAFNGAFSVLQTMIL) threads the bilayer. The Mitochondrial matrix portion of the chain corresponds to 317-402 (RNKWVRSKLK…HKSNFINNKK (86 aa)). The segment covering 366–385 (RQLMQDNEKKLQESFKEKRQ) has biased composition (basic and acidic residues). The interval 366-386 (RQLMQDNEKKLQESFKEKRQN) is disordered.

Belongs to the OXA1/ALB3/YidC family. Interacts with the large ribosome subunit of mitochondrial ribosome. Interacts directly with MRP20. Interacts with OXA1.

It is found in the mitochondrion inner membrane. Its function is as follows. Mitochondrial inner membrane insertase that mediates the insertion of both mitochondrion-encoded precursors and nuclear-encoded proteins from the matrix into the inner membrane. Links mitoribosomes with the inner membrane. Forms pores capable of accommodating translocating protein segments. Essential for the activity and assembly of cytochrome c oxidase. Plays a central role in the translocation and export of the N-terminal part of the COX2 protein into the mitochondrial intermembrane space. The polypeptide is Mitochondrial inner membrane protein OXA1 (Saccharomyces cerevisiae (strain ATCC 204508 / S288c) (Baker's yeast)).